The chain runs to 240 residues: UDP-2,3-diacylglucosamine hydrolase (240 aa).

Aspartate 8, histidine 10, aspartate 41, asparagine 79, and histidine 114 together coordinate Mn(2+). Residue asparagine 79 to arginine 80 participates in substrate binding. Aspartate 122, serine 160, asparagine 164, lysine 167, and histidine 195 together coordinate substrate. Residues histidine 195 and histidine 197 each coordinate Mn(2+).

Belongs to the LpxH family. The cofactor is Mn(2+).

The protein resides in the cell inner membrane. It catalyses the reaction UDP-2-N,3-O-bis[(3R)-3-hydroxytetradecanoyl]-alpha-D-glucosamine + H2O = 2-N,3-O-bis[(3R)-3-hydroxytetradecanoyl]-alpha-D-glucosaminyl 1-phosphate + UMP + 2 H(+). Its pathway is glycolipid biosynthesis; lipid IV(A) biosynthesis; lipid IV(A) from (3R)-3-hydroxytetradecanoyl-[acyl-carrier-protein] and UDP-N-acetyl-alpha-D-glucosamine: step 4/6. Functionally, hydrolyzes the pyrophosphate bond of UDP-2,3-diacylglucosamine to yield 2,3-diacylglucosamine 1-phosphate (lipid X) and UMP by catalyzing the attack of water at the alpha-P atom. Involved in the biosynthesis of lipid A, a phosphorylated glycolipid that anchors the lipopolysaccharide to the outer membrane of the cell. This Salmonella paratyphi C (strain RKS4594) protein is UDP-2,3-diacylglucosamine hydrolase.